We begin with the raw amino-acid sequence, 5875 residues long: Probable E3 ubiquitin-protein ligase DDB_G0283893 (5875 aa).

Disordered regions lie at residues 17 to 64, 164 to 185, 232 to 276, 302 to 342, 642 to 693, 716 to 740, 1081 to 1101, 1291 to 1367, 1806 to 1851, 1952 to 1982, 2008 to 2036, 2109 to 2203, 2893 to 2930, 3083 to 3119, and 3195 to 3214; these read DNNN…QPPE, NNNNNNDNNSNNKTDDNNQSNN, DSNN…TTTS, PSFK…CGNG, TTTT…SPPI, SIRSSSNKVNEGTPKSSTTTTTTNA, ITPTNTTTTTTTTTPSTTSIP, DGWE…KEST, QESE…SSPP, KKPSSDQQHHSGGCHHSNHHHHHHHSRKDEV, EDEDELQYLSEDEKVVNGNENTGEEDDEE, KALK…TGSG, DSDDSDDEFPTVDENVTSSGLSTSAGGSGGGVAGTNDS, TSPSSSKGKSSSASASSSSSTTTATSTLPSNTQSGSN, and LLPPPSSSSNENVVDNDNTN. Positions 18-52 are enriched in low complexity; that stretch reads NNNNNNNNNNNNNNNNNNNNNNNNNNNSNNNNNKN. Residues 237–249 are compositionally biased toward basic and acidic residues; sequence DNKENKKEDKESS. 3 stretches are compositionally biased toward low complexity: residues 250–276, 317–333, and 642–656; these read KPIASSPIPITTTNIEKPTIATTTTTS, TSTITTQPLPSSTITQP, and TTTTTATTTTTTTTT. The span at 657–669 shows a compositional bias: polar residues; sequence NESIPMETTRSST. A compositionally biased stretch (low complexity) spans 670 to 693; sequence PIPIVNNNNNNNDSKSNSKKSPPI. A compositionally biased stretch (polar residues) spans 716–725; that stretch reads SIRSSSNKVN. A compositionally biased stretch (low complexity) spans 728–740; sequence TPKSSTTTTTTNA. Acidic residues predominate over residues 1297 to 1330; the sequence is FNDDDDEEEDEEEEEEMDEDDSENDEDEDSEESE. Residues 1300–1328 adopt a coiled-coil conformation; the sequence is DDDEEEDEEEEEEMDEDDSENDEDEDSEE. Low complexity-rich tracts occupy residues 1347–1363 and 1838–1851; these read TTTTTAAAATTTATATT and SNSSPALTASSSPP. A compositionally biased stretch (basic residues) spans 1963 to 1977; it reads GGCHHSNHHHHHHHS. The segment at 2042-2113 adopts a UBR-type zinc-finger fold; sequence KVCTYTFTKN…KGNPCKALKP (72 aa). Composition is skewed to low complexity over residues 2118-2168 and 2178-2203; these read PPKQ…TNTN and SSSSSNSSPSFNNNNNNNNNGTTGSG. Residues 2893–2903 are compositionally biased toward acidic residues; it reads DSDDSDDEFPT. Residues 2908–2917 are compositionally biased toward low complexity; the sequence is VTSSGLSTSA. Low complexity predominate over residues 3201–3211; that stretch reads SSSNENVVDND. The ZZ-type zinc-finger motif lies at 3226–3280; sequence EVLFSCDLCNINPITGKRWNCSNCGDFDLCNQCYQNPEKDHPKDHIFKEFIIDEP. Residues cysteine 3231, cysteine 3234, cysteine 3246, cysteine 3249, cysteine 3255, cysteine 3258, histidine 3266, and histidine 3270 each contribute to the Zn(2+) site. 3 disordered regions span residues 3282–3312, 3326–3359, and 3754–3776; these read KDGDEKESTNEPPQQQKQQDQQLQQDLQDDS, LNNNNNNNNNNESMDTSTLTTTTTTTNKTTPTTN, and SSTSQDTQQESSNNNNNNNSNDI. Low complexity-rich tracts occupy residues 3295–3307 and 3327–3358; these read QQQKQQDQQLQQD and NNNNNNNNNNESMDTSTLTTTTTTTNKTTPTT. One can recognise a UIM domain in the interval 3313 to 3332; that stretch reads EYDEELKIAISMSLNNNNNN. Residues 3754 to 3763 are compositionally biased toward polar residues; the sequence is SSTSQDTQQE. Residues 3764–3774 show a composition bias toward low complexity; the sequence is SSNNNNNNNSN. The stretch at 4118-4146 forms a coiled coil; sequence IENQEDHKRAIQTIEKESENAHKKYQRLI. A compositionally biased stretch (low complexity) spans 4182 to 4222; sequence NTSTNSTGSNNQSINSSSGNISTNSSSSSSSSFGISNQSSS. 3 disordered regions span residues 4182 to 4237, 4295 to 4323, and 4616 to 4671; these read NTST…GGVI, FISGGGQPSSNDKQQQQQQQQQQSSRQCP, and KILS…FDND. Positions 4223–4236 are enriched in gly residues; sequence GNGGGGVGSGGGGV. Positions 4308–4317 are enriched in low complexity; that stretch reads QQQQQQQQQQ. Residues 4585-4618 adopt a coiled-coil conformation; the sequence is QIQQQIALQQQQIQQQIQQQQQQLNESVSGLKIL. Low complexity-rich tracts occupy residues 4619 to 4635 and 4645 to 4659; these read SPSSSSSSPSGVGATGS and SSGSSVSGSGSISSS. Residues 5357-5870 form a UBR4 E3 catalytic module region; sequence PALPFVLVLL…EYLLKLYKSV (514 aa). The segment at 5476-5620 adopts a HemiRING-type zinc-finger fold; the sequence is GFTCMVCREG…WVNLNNISRV (145 aa). Zn(2+) is bound by residues cysteine 5479, cysteine 5482, histidine 5554, and cysteine 5557. In terms of domain architecture, UZI spans 5623–5870; that stretch reads PKFRILSHDL…EYLLKLYKSV (248 aa). A coiled-coil region spans residues 5819-5846; it reads QVDVKELLNCFENELKEFQDEMEFFDDE.

Belongs to the UBR4 family.

Its pathway is protein modification; protein ubiquitination. Functionally, probable E3 ubiquitin-protein ligase. This is Probable E3 ubiquitin-protein ligase DDB_G0283893 from Dictyostelium discoideum (Social amoeba).